A 175-amino-acid polypeptide reads, in one-letter code: Diacylglycerol kinase (175 aa).

Transmembrane regions (helical) follow at residues 55–75 and 96–116; these read VAPN…YAFA and LLHL…LVMI. The Proton acceptor role is filled by glutamate 118. Glutamate 125 is a binding site for a divalent metal cation. Residues 151–171 traverse the membrane as a helical segment; the sequence is VLLAAIAAVIVGGCLLLPPLL.

This sequence belongs to the bacterial diacylglycerol kinase family. It depends on Mg(2+) as a cofactor.

It is found in the cell membrane. The catalysed reaction is a 1,2-diacyl-sn-glycerol + ATP = a 1,2-diacyl-sn-glycero-3-phosphate + ADP + H(+). Catalyzes the ATP-dependent phosphorylation of sn-l,2-diacylglycerol (DAG) to phosphatidic acid. In Synechocystis sp. (strain ATCC 27184 / PCC 6803 / Kazusa), this protein is Diacylglycerol kinase (dgkA).